A 370-amino-acid polypeptide reads, in one-letter code: 5-hydroxytryptamine receptor 5B (370 aa).

A disordered region spans residues 1-36 (MEVSNLSGATPGIAFPPGPESCSDSPSSGRSMGSTP). Residues 1–48 (MEVSNLSGATPGIAFPPGPESCSDSPSSGRSMGSTPGGLILSGREPPF) are Extracellular-facing. N-linked (GlcNAc...) asparagine glycosylation is present at N5. Low complexity predominate over residues 20–36 (ESCSDSPSSGRSMGSTP). Residues 49–75 (SAFTVLVVTLLVLLIAATFLWNLLVLV) form a helical membrane-spanning segment. The Cytoplasmic segment spans residues 76-88 (TILRVRAFHRVPH). The helical transmembrane segment at 89–115 (NLVASTAVSDVLVAALVMPLSLVSELS) threads the bilayer. Topologically, residues 116–127 (AGRRWQLGRSLC) are extracellular. C127 and C205 are oxidised to a cystine. The helical transmembrane segment at 128-150 (HVWISFDVLCCTASIWNVAAIAL) threads the bilayer. A serotonin-binding site is contributed by D134. Residues 151-168 (DRYWTITRHLQYTLRTRR) lie on the Cytoplasmic side of the membrane. A helical membrane pass occupies residues 169–189 (RASALMIAITWALSALIALAP). The Extracellular portion of the chain corresponds to 190 to 211 (LLFGWGEAYDARLQRCQVSQEP). Residues 212–233 (SYAVFSTCGAFYVPLAVVLFVY) traverse the membrane as a helical segment. Residues 234 to 300 (WKIYKAAKFR…QKEKRAAMMV (67 aa)) are Cytoplasmic-facing. A helical membrane pass occupies residues 301 to 325 (GILIGVFVLCWIPFFLTELVSPLCA). Topologically, residues 326 to 327 (CS) are extracellular. A helical membrane pass occupies residues 328 to 352 (LPPIWKSIFLWLGYSNSFFNPLIYT). Topologically, residues 353 to 370 (AFNKNYNNAFKSLFTKQR) are cytoplasmic.

It belongs to the G-protein coupled receptor 1 family. Brain; in the CA1 region of hippocampus, the medial habenula, and raphe nuclei.

It is found in the cell membrane. G-protein coupled receptor for 5-hydroxytryptamine (serotonin), a biogenic hormone that functions as a neurotransmitter, a hormone and a mitogen. Also functions as a receptor for ergot alkaloid derivatives and other psychoactive substances. Ligand binding causes a conformation change that triggers signaling via guanine nucleotide-binding proteins (G proteins) and modulates the activity of downstream effectors. Htr5b is coupled to G(i)/G(o) G alpha proteins and mediates inhibitory neurotransmission: signaling inhibits adenylate cyclase activity and activates a phosphatidylinositol-calcium second messenger system that regulates the release of Ca(2+) ions from intracellular stores. The polypeptide is 5-hydroxytryptamine receptor 5B (Rattus norvegicus (Rat)).